A 288-amino-acid chain; its full sequence is Nickel/cobalt efflux system RcnA (288 aa).

Topologically, residues 1 to 12 are periplasmic; that stretch reads MGEFSTLLQQGN. Residues 13–33 traverse the membrane as a helical segment; sequence GWFFIPSAILLGILHGLEPGH. Over 34 to 51 the chain is Cytoplasmic; that stretch reads SKTMMAAFIIAIKGTVKQ. The helical transmembrane segment at 52–72 threads the bilayer; that stretch reads AVMLGLAATLSHTAIVWLIAL. Over 73-85 the chain is Periplasmic; that stretch reads GGMYLSRAFTAQS. Residues 86–106 traverse the membrane as a helical segment; that stretch reads VEPWLQLISAIIILSTACWMF. At 107-188 the chain is on the cytoplasmic side; the sequence is WRTWRGEQQW…FDGQTVTNGQ (82 aa). Positions 122–155 are enriched in basic and acidic residues; sequence HHDHDHDHDHDHDHDHDHDHDHDHDHDHHGHIHP. The segment at 122 to 166 is disordered; that stretch reads HHDHDHDHDHDHDHDHDHDHDHDHDHDHHGHIHPEGATSKAYQDA. A helical transmembrane segment spans residues 189-209; that stretch reads ILLFGLTGGLIPCPAAITVLL. The Periplasmic segment spans residues 210 to 223; it reads ICIQLKAFTLGATM. The helical transmembrane segment at 224 to 244 threads the bilayer; that stretch reads VLSFSLGLALTLVTVGVGAAI. The Cytoplasmic portion of the chain corresponds to 245–265; it reads SVQQAAKRWSGFSTLARRAPY. The helical transmembrane segment at 266–286 threads the bilayer; the sequence is FSSILIGLVGVYMGIHGYTGI. At 287 to 288 the chain is on the periplasmic side; sequence MQ.

It belongs to the NiCoT transporter (TC 2.A.52) family. RcnA subfamily.

The protein localises to the cell inner membrane. Efflux system for nickel and cobalt. The polypeptide is Nickel/cobalt efflux system RcnA (rcnA) (Salmonella typhimurium (strain LT2 / SGSC1412 / ATCC 700720)).